Consider the following 519-residue polypeptide: Sorting nexin-2 (519 aa).

The interval 1–104 is disordered; sequence MAAEREPPPL…EPSPAVTPVT (104 aa). 2 stretches are compositionally biased toward low complexity: residues 27-50 and 93-104; these read LFTS…LPAE and SSEPSPAVTPVT. A Phosphoserine modification is found at Ser-97. Phosphothreonine occurs at positions 101 and 104. Residues Ser-117 and Ser-119 each carry the phosphoserine modification. A PX domain is found at 140–269; the sequence is FDIEIGVSDP…QFLESSELPR (130 aa). Residues Arg-183, Ser-185, Lys-211, and Arg-235 each contribute to the a 1,2-diacyl-sn-glycero-3-phospho-(1D-myo-inositol-3-phosphate) site. Ser-185 carries the post-translational modification Phosphoserine. Residues 260 to 519 form an interaction with RhoG region; that stretch reads QFLESSELPR…AFLPEAKAIA (260 aa). Ser-277 carries the phosphoserine modification. The interval 278–295 is membrane-binding amphipathic helix; that stretch reads GAGILRMVNKAADAVNKM. Residues 299–519 form the BAR domain; sequence MNESDAWFEE…AFLPEAKAIA (221 aa). At Lys-469 the chain carries N6-acetyllysine.

The protein belongs to the sorting nexin family. As to quaternary structure, predominantly forms heterodimers with BAR domain-containing sorting nexins SNX5, SNX6 and SNX32; can self-associate to form homodimers. The heterodimers are proposed to self-assemble into helical arrays on the membrane to stabilize and expand local membrane curvature underlying endosomal tubule formation. Thought to be a component of the originally described retromer complex (also called SNX-BAR retromer) which is a pentamer containing the heterotrimeric retromer cargo-selective complex (CSC), also described as vacuolar protein sorting subcomplex (VPS), and a heterodimeric membrane-deforming subcomplex formed between SNX1 or SNX2 and SNX5 or SNX6 (also called SNX-BAR subcomplex); the respective CSC and SNX-BAR subcomplexes associate with low affinity. Interacts with SNX5, SNX6, SNX32, VPS26A, VPS29, VPS35, FNBP1, KALRN, RHOG (GDP-bound form).

It localises to the early endosome membrane. The protein resides in the cell projection. It is found in the lamellipodium. Its function is as follows. Involved in several stages of intracellular trafficking. Interacts with membranes containing phosphatidylinositol 3-phosphate (PtdIns(3P)) or phosphatidylinositol 3,5-bisphosphate (PtdIns(3,5)P2). Acts in part as component of the retromer membrane-deforming SNX-BAR subcomplex. The SNX-BAR retromer mediates retrograde transport of cargo proteins from endosomes to the trans-Golgi network (TGN) and is involved in endosome-to-plasma membrane transport for cargo protein recycling. The SNX-BAR subcomplex functions to deform the donor membrane into a tubular profile called endosome-to-TGN transport carrier (ETC). Can sense membrane curvature and has in vitro vesicle-to-membrane remodeling activity. Required for retrograde endosome-to-TGN transport of TGN38. Promotes KALRN- and RHOG-dependent but retromer-independent membrane remodeling such as lamellipodium formation; the function is dependent on GEF activity of KALRN. The sequence is that of Sorting nexin-2 (SNX2) from Homo sapiens (Human).